The chain runs to 682 residues: Tail-specific protease (682 aa).

A signal peptide spans 1 to 22 (MNTFFRLTALAGLLALAGQSFA). In terms of domain architecture, PDZ spans 238–322 (NTEMSLSLEG…SKVRLEILPA (85 aa)). Residues S452, D463, and K477 each act as charge relay system in the active site.

Belongs to the peptidase S41A family.

It localises to the cell inner membrane. The catalysed reaction is The enzyme shows specific recognition of a C-terminal tripeptide, Xaa-Yaa-Zaa, in which Xaa is preferably Ala or Leu, Yaa is preferably Ala or Tyr, and Zaa is preferably Ala, but then cleaves at a variable distance from the C-terminus. A typical cleavage is -Ala-Ala-|-Arg-Ala-Ala-Lys-Glu-Asn-Tyr-Ala-Leu-Ala-Ala.. Involved in the cleavage of a C-terminal peptide of 11 residues from the precursor form of penicillin-binding protein 3 (PBP3). May be involved in protection of the bacterium from thermal and osmotic stresses. In Salmonella typhimurium (strain LT2 / SGSC1412 / ATCC 700720), this protein is Tail-specific protease (prc).